The chain runs to 457 residues: Dihydrolipoyllysine-residue acetyltransferase component of pyruvate dehydrogenase complex, mitochondrial (457 aa).

The transit peptide at Met-1 to Tyr-30 directs the protein to the mitochondrion. Positions His-36–Val-112 constitute a Lipoyl-binding domain. Residue Lys-77 is modified to N6-lipoyllysine. Residues Ala-129–Gly-168 form a disordered region. Over residues Pro-139–Ser-149 the composition is skewed to basic and acidic residues. At Lys-148 the chain carries N6-crotonyllysine. The Peripheral subunit-binding (PSBD) domain maps to Asn-179–Ile-216. Catalysis depends on residues His-430 and Asp-434.

Belongs to the 2-oxoacid dehydrogenase family. Eukaryotic pyruvate dehydrogenase (PDH) complexes are organized as a core consisting of the oligomeric dihydrolipoamide acetyl-transferase (E2), around which are arranged multiple copies of pyruvate dehydrogenase (E1), dihydrolipoamide dehydrogenase (E3) and protein X (E3BP) bound by non-covalent bonds. Interacts with SIR5; the interaction is direct. (R)-lipoate serves as cofactor. Post-translationally, decrotonylated at 'Lys-148' by SIR5, which inhibits the activity of the pyruvate dehydrogenase complex (PDC).

The protein resides in the mitochondrion matrix. The enzyme catalyses N(6)-[(R)-dihydrolipoyl]-L-lysyl-[protein] + acetyl-CoA = N(6)-[(R)-S(8)-acetyldihydrolipoyl]-L-lysyl-[protein] + CoA. Its function is as follows. The pyruvate dehydrogenase complex catalyzes the overall conversion of pyruvate to acetyl-CoA and CO(2). High pyruvate dehydrogenase complex activity is required for sufficient energy production during germination of conidia. This chain is Dihydrolipoyllysine-residue acetyltransferase component of pyruvate dehydrogenase complex, mitochondrial, found in Fusarium oxysporum f. sp. lycopersici (strain 4287 / CBS 123668 / FGSC 9935 / NRRL 34936) (Fusarium vascular wilt of tomato).